The following is a 350-amino-acid chain: C-X-C chemokine receptor type 1 (350 aa).

Topologically, residues 1–39 (MSNITDPQMWDFDDLNFTGMPPTDEGYSPCRLETETLNK) are extracellular. 2 N-linked (GlcNAc...) asparagine glycosylation sites follow: N3 and N16. Residues 40-66 (YVVIITYALVFLLSLLGNSLVMLVILY) traverse the membrane as a helical segment. Residues 67–75 (SRVGRSVTD) are Cytoplasmic-facing. A helical transmembrane segment spans residues 76–96 (VYLLNLALADLLFALTLPIWA). The Extracellular segment spans residues 97–111 (ASKVNGWIFGTFLCK). An intrachain disulfide couples C110 to C187. Residues 112 to 133 (VVSLLKEVNFYSGILLLACISV) traverse the membrane as a helical segment. The Cytoplasmic portion of the chain corresponds to 134–154 (DRYLAIVHATRTLTQKRHLVK). The helical transmembrane segment at 155–174 (FVCLGCWGLSMNLSLPFFLF) threads the bilayer. The Extracellular portion of the chain corresponds to 175-199 (RQAYHPNNSSPVCYEVLGNDTAKWR). Residues 200–220 (MVLRILPHTFGFIVPLFVMLF) form a helical membrane-spanning segment. Over 221–242 (CYGFTLRTLFKAHMGQKHRAMR) the chain is Cytoplasmic. The chain crosses the membrane as a helical span at residues 243-264 (VIFAVVLIFLLCWLPYNLVLLA). Topologically, residues 265 to 285 (DTLMRTQVIQESCERRNNIGR) are extracellular. A helical transmembrane segment spans residues 286–308 (ALDATEILGFLHSCLNPIIYAFI). Residues 309 to 350 (GQNFRHGFLKILAMHGLVSKEFLARHRVTSYTSSSVNVSSNL) lie on the Cytoplasmic side of the membrane.

This sequence belongs to the G-protein coupled receptor 1 family. As to quaternary structure, interacts with IL8. Interacts with GNAI2.

The protein resides in the cell membrane. Its function is as follows. Receptor to interleukin-8, which is a powerful neutrophils chemotactic factor. Binding of IL-8 to the receptor causes activation of neutrophils. This response is mediated via a G-protein that activates a phosphatidylinositol-calcium second messenger system. This chain is C-X-C chemokine receptor type 1 (CXCR1), found in Pan troglodytes (Chimpanzee).